Consider the following 667-residue polypeptide: MSREPEIMESQVMWEPDSKRNTHMDRFRAAVAGSCGLRLANYNDLYQWSVESFADFWAEFWKYSNIVCSRLYDEVVDTSKSIADVPEWFKGSRLNYAENLLKHKDNDKIALYAAKEGKEEILKVTFEELRQAVALYAAAMRKMGVKIGDRVVGYLPNSIHAVEAMLAAASIGAIWSSTSPDFGINGVLDRFSQIQPKLIFSVEAVVYNGKEHNHLEKLLSVVKGLPDLKKVVVIPYVSSRETIDISKIPNSVFLEDFLATGKGDQAPQLEFEQLPFSHPLFIMYSSGTTGAPKCMVHSAGGTLIQHLKEHILHGNMSSNDIIMYYTTTGWMMWNWLVTALATGASVVLYDGSPLVPSPNVLWDLIDRLGITILGTGAKWLAVLEEKNLKPCETHNLQTLHTILSTGSPLKSQSYEYVYKHIKSSVLLGSISGGTDIISCFMGQNVTIPVYKGEIQARNLGMAVEAWNDEGKPVWGESGELVCTKPIPCQPTHFWNDENGSKYRKAYFSKFPGVWAHGDYCKINPKTGGIVMLGRSDGTLNPNGVRFGSSEIYNIVEAFEEVSDSLCVPQYNKDGEERVILFLKMASNHAFSEDLVKRIRDAIRVALSARHVPSLILETKGIPYTINGKKVEVAVKQIIAGKEVEQRGAFSNPETLDLYQNIPELQNF.

This sequence belongs to the ATP-dependent AMP-binding enzyme family.

Its subcellular location is the cytoplasm. The protein resides in the cytosol. The catalysed reaction is acetoacetate + ATP + CoA = acetoacetyl-CoA + AMP + diphosphate. Functionally, converts acetoacetate to acetoacetyl-CoA in the cytosol. Ketone body-utilizing enzyme, responsible for the synthesis of cholesterol and fatty acids. This chain is Acetoacetyl-CoA synthetase (AACS), found in Gallus gallus (Chicken).